The following is a 63-amino-acid chain: UPF0337 protein Atu0782 (63 aa).

The disordered stretch occupies residues 1 to 63 (MGSTSDKIAG…DAVKGAVDRM (63 aa)). Over residues 51–63 (KAKDAVKGAVDRM) the composition is skewed to basic and acidic residues.

Belongs to the UPF0337 (CsbD) family.

This chain is UPF0337 protein Atu0782, found in Agrobacterium fabrum (strain C58 / ATCC 33970) (Agrobacterium tumefaciens (strain C58)).